Reading from the N-terminus, the 832-residue chain is Protein P (832 aa).

Positions 1-177 (MPLSYQHFRR…FCGSPYSWEQ (177 aa)) are terminal protein domain (TP). A spacer region spans residues 178–335 (ELQHGAESFH…YCLSHIVNLL (158 aa)). The interval 186–229 (FHQQSSGILSRPPVGSSLQSKHSKSRLGLQSQQGHLARRQQGRS) is disordered. A polymerase/reverse transcriptase domain (RT) region spans residues 336–679 (EDWGPCAEHG…YLNLYPVARQ (344 aa)). The 244-residue stretch at 346-589 (EHHIRTPRTP…YSLNFMGYVI (244 aa)) folds into the Reverse transcriptase domain. Mg(2+) contacts are provided by Asp-418, Asp-540, and Asp-541.

It belongs to the hepadnaviridae P protein family.

The enzyme catalyses DNA(n) + a 2'-deoxyribonucleoside 5'-triphosphate = DNA(n+1) + diphosphate. The catalysed reaction is Endonucleolytic cleavage to 5'-phosphomonoester.. Its activity is regulated as follows. Activated by host HSP70 and HSP40 in vitro to be able to bind the epsilon loop of the pgRNA. Because deletion of the RNase H region renders the protein partly chaperone-independent, the chaperones may be needed indirectly to relieve occlusion of the RNA-binding site by this domain. Inhibited by several reverse-transcriptase inhibitors: Lamivudine, Adefovir and Entecavir. Multifunctional enzyme that converts the viral RNA genome into dsDNA in viral cytoplasmic capsids. This enzyme displays a DNA polymerase activity that can copy either DNA or RNA templates, and a ribonuclease H (RNase H) activity that cleaves the RNA strand of RNA-DNA heteroduplexes in a partially processive 3'- to 5'-endonucleasic mode. Neo-synthesized pregenomic RNA (pgRNA) are encapsidated together with the P protein, and reverse-transcribed inside the nucleocapsid. Initiation of reverse-transcription occurs first by binding the epsilon loop on the pgRNA genome, and is initiated by protein priming, thereby the 5'-end of (-)DNA is covalently linked to P protein. Partial (+)DNA is synthesized from the (-)DNA template and generates the relaxed circular DNA (RC-DNA) genome. After budding and infection, the RC-DNA migrates in the nucleus, and is converted into a plasmid-like covalently closed circular DNA (cccDNA). The activity of P protein does not seem to be necessary for cccDNA generation, and is presumably released from (+)DNA by host nuclear DNA repair machinery. The chain is Protein P from Hepatitis B virus genotype D (isolate Germany/1-91/1991) (HBV-D).